The chain runs to 355 residues: Inner membrane protein YghQ (355 aa).

Residues 1-37 (MAGFNIKHWFADGAFRTIIRNSAWLGSSNVVSALLGL) are Periplasmic-facing. A helical transmembrane segment spans residues 38–58 (LALSCAGKGMTPAMFGVLVIV). Residues 59–100 (QSYAKSISDFIKFQTWQLVVQYGTPALTNNNPQQFRNVVSFS) lie on the Cytoplasmic side of the membrane. Residues 101–121 (FSLDIVSGAVAIVGGIALLPF) traverse the membrane as a helical segment. The Periplasmic segment spans residues 122 to 134 (LSHSLGLDDQSFW). The helical transmembrane segment at 135-155 (LAALYCTLIPSMASSTPTGIL) threads the bilayer. Over 156-177 (RAVDRFDLIAVQQATKPFLRAA) the chain is Cytoplasmic. The chain crosses the membrane as a helical span at residues 178–198 (GSVVAWYFDFGFAGFVIAWYV). Over 199 to 261 (SNLVGGTMYW…WSARNSCSTV (63 aa)) the chain is Periplasmic. A helical transmembrane segment spans residues 262-282 (LVGIVLGPAAAGLFKIAMTFF). Over 283 to 323 (DAAGTPAGLLGKSFYPEVMRLDPRTTRPWLLGVKSGLLAGG) the chain is Cytoplasmic. A helical membrane pass occupies residues 324 to 344 (IGILVALAVLIVGKPLISLVF). Residues 345–355 (GVKYLEAYDLI) are Periplasmic-facing.

It is found in the cell inner membrane. This is Inner membrane protein YghQ (yghQ) from Escherichia coli (strain K12).